The following is a 1206-amino-acid chain: DNA polymerase beta (1206 aa).

A run of 4 repeats spans residues 1071-1074 (AGNP), 1075-1078 (AGNP), 1079-1082 (AGNP), and 1083-1086 (AGNA). The segment at 1071–1086 (AGNPAGNPAGNPAGNA) is 4 X 4 AA tandem repeats of A-G-[NK]-[PA].

It belongs to the DNA polymerase type-B family.

It carries out the reaction DNA(n) + a 2'-deoxyribonucleoside 5'-triphosphate = DNA(n+1) + diphosphate. In terms of biological role, DNA-directed DNA polymerase involved in viral DNA replication. This chain is DNA polymerase beta, found in Ornithodoros (relapsing fever ticks).